Consider the following 178-residue polypeptide: Photosystem I assembly protein Ycf4 (178 aa).

The next 2 helical transmembrane spans lie at 19–39 (FLVA…SLSS) and 61–81 (LVMG…WYVI).

It belongs to the Ycf4 family.

The protein localises to the cellular thylakoid membrane. Functionally, seems to be required for the assembly of the photosystem I complex. The protein is Photosystem I assembly protein Ycf4 of Synechococcus sp. (strain CC9902).